The sequence spans 419 residues: MTSTDVSSGVSNCYVFKSRLQEYAQKYKLPTPVYEIVKEGPSHKSLFQSTVILDGVRYNSLPGFFNRKAAEQSAAEVALRELAKSSELSQCVSQPVHETGLCKNLLQEYAQKMNYAIPLYQCQKVETLGRVTQFTCTVEIGGIKYTGAATRTKKDAEISAGRTALLAIQSDTKNNLANYNTQLTVLPCEKKTIQAAIPLKETVKTLKARKAQFKKKAQKGKRTVAKNPEDIIIPPQPTDHCQNDQSEKIETTPNLEPSSCMNGLKEAAFGSVETEKIETTPNLEPPSCMNGLKEAAFGSVETEKIETTPNLEPPSCMNGLKEAAFGSVETEKIETTPNLEPSSCMNGLKEAAFGSVETEKIETTPNLEPPSCMNGLKEAAFGSVETEKIETTPNLESSSCMSGLKEAAFGSVETEASHA.

2 consecutive DRBM domains span residues 15-84 (VFKS…ELAK) and 101-170 (LCKN…AIQS). A Bipartite nuclear localization motif is present at residues 207 to 222 (KARKAQFKKKAQKGKR). 6 tandem repeats follow at residues 247 to 274 (EKIE…SVET), 275 to 302 (EKIE…SVET), 303 to 330 (EKIE…SVET), 331 to 358 (EKIE…SVET), 359 to 386 (EKIE…SVET), and 387 to 414 (EKIE…SVET). The segment at 247–414 (EKIETTPNLE…KEAAFGSVET (168 aa)) is 6 X 28 AA repeats of E-K-I-E-T-T-P-N-L-E-[PS]-[PS]-S-C-M-[NS]-G-L-K-E-A-A-F-G-S-V-E-T.

In terms of assembly, homodimer. Heterodimer with DRB2, DRB4 or DRB5. Interacts with SE and DCL1. Interacts with RCF3, RS40 and RS41. As to expression, expressed in rosette and cauline leaves, stems, roots, flowers and siliques.

It localises to the nucleus. Its subcellular location is the nucleus speckle. In terms of biological role, double-stranded RNA-binding protein involved in RNA-mediated post-transcriptional gene silencing (PTGS). Functions in the microRNAs (miRNAs) biogenesis by assisting DICER-LIKE 1 (DCL1) in the accurate processing from primary miRNAs (pri-miRNAs) to miRNAs in the nucleus. Forms a complex with SERRATE (SE) and DCL1 to promote accurate processing of pri-miRNAs by DCL1. Binds and assist DCL1 for accurate processing of precursor miRNAs (pre-miRNA). Indirectly involved in the production of trans-acting small interfering RNAs (ta-siRNAs) derived from the TAS1, TAS2 or TAS3 endogenous transcripts by participating in the production of their initiating miRNAs. Involved with argonaute 1 (AGO1) in the guide strand selection from miRNA duplexes, presumably by directional loading of the miRNA duplex (guide stand and passenger strand) onto the RNA-induced silencing complex (RISC) for passenger strand degradation. Does not participate in sense transgene-induced post-transcriptional gene silencing (S-PTGS). Involved in several plant development aspects and response to hormones through its role in miRNAs processing. The sequence is that of Double-stranded RNA-binding protein 1 (DRB1) from Arabidopsis thaliana (Mouse-ear cress).